The sequence spans 130 residues: MAVKKRAGAKKKEKKVIPVGKAYVQATFNNTIVTLTDLQGNVIAWASCGTAGFKGSRKGTPYAAQMAAQTAARKAAESGLRQVEVLVKGPGSGREAAIRSLQASGINVTAIRDVTPIPHNGCRPPKRRRV.

Belongs to the universal ribosomal protein uS11 family. In terms of assembly, part of the 30S ribosomal subunit. Interacts with proteins S7 and S18. Binds to IF-3.

Functionally, located on the platform of the 30S subunit, it bridges several disparate RNA helices of the 16S rRNA. Forms part of the Shine-Dalgarno cleft in the 70S ribosome. This chain is Small ribosomal subunit protein uS11, found in Dehalococcoides mccartyi (strain ATCC BAA-2100 / JCM 16839 / KCTC 5957 / BAV1).